We begin with the raw amino-acid sequence, 513 residues long: Cytochrome P450 1A2 (513 aa).

Ser68 carries O-linked (GlcNAc) serine glycosylation. Phe225 is a substrate binding site. Heme is bound at residue Cys456.

It belongs to the cytochrome P450 family. As to quaternary structure, interacts with PGRMC1; the interaction requires PGRMC1 homodimerization. The cofactor is heme. In terms of tissue distribution, found in lung and liver.

The protein localises to the endoplasmic reticulum membrane. It is found in the microsome membrane. It catalyses the reaction an organic molecule + reduced [NADPH--hemoprotein reductase] + O2 = an alcohol + oxidized [NADPH--hemoprotein reductase] + H2O + H(+). It carries out the reaction 17beta-estradiol + reduced [NADPH--hemoprotein reductase] + O2 = 2-hydroxy-17beta-estradiol + oxidized [NADPH--hemoprotein reductase] + H2O + H(+). The enzyme catalyses 17beta-estradiol + reduced [NADPH--hemoprotein reductase] + O2 = 4-hydroxy-17beta-estradiol + oxidized [NADPH--hemoprotein reductase] + H2O + H(+). The catalysed reaction is estrone + reduced [NADPH--hemoprotein reductase] + O2 = 2-hydroxyestrone + oxidized [NADPH--hemoprotein reductase] + H2O + H(+). It catalyses the reaction estrone + reduced [NADPH--hemoprotein reductase] + O2 = 4-hydroxyestrone + oxidized [NADPH--hemoprotein reductase] + H2O + H(+). It carries out the reaction cholesterol + reduced [NADPH--hemoprotein reductase] + O2 = 25-hydroxycholesterol + oxidized [NADPH--hemoprotein reductase] + H2O + H(+). The enzyme catalyses all-trans-retinol + reduced [NADPH--hemoprotein reductase] + O2 = all-trans-retinal + oxidized [NADPH--hemoprotein reductase] + 2 H2O + H(+). The catalysed reaction is all-trans-retinal + reduced [NADPH--hemoprotein reductase] + O2 = all-trans-retinoate + oxidized [NADPH--hemoprotein reductase] + H2O + 2 H(+). It catalyses the reaction (5Z,8Z,11Z,14Z)-eicosatetraenoate + reduced [NADPH--hemoprotein reductase] + O2 = (14R,15S)-epoxy-(5Z,8Z,11Z)-eicosatrienoate + oxidized [NADPH--hemoprotein reductase] + H2O + H(+). It carries out the reaction (5Z,8Z,11Z,14Z)-eicosatetraenoate + reduced [NADPH--hemoprotein reductase] + O2 = (14S,15R)-epoxy-(5Z,8Z,11Z)-eicosatrienoate + oxidized [NADPH--hemoprotein reductase] + H2O + H(+). The enzyme catalyses (5Z,8Z,11Z,14Z,17Z)-eicosapentaenoate + reduced [NADPH--hemoprotein reductase] + O2 = (17R,18S)-epoxy-(5Z,8Z,11Z,14Z)-eicosatetraenoate + oxidized [NADPH--hemoprotein reductase] + H2O + H(+). The catalysed reaction is (4Z,7Z,10Z,13Z,16Z,19Z)-docosahexaenoate + reduced [NADPH--hemoprotein reductase] + O2 = (19R,20S)-epoxy-(4Z,7Z,10Z,13Z,16Z)-docosapentaenoate + oxidized [NADPH--hemoprotein reductase] + H2O + H(+). It catalyses the reaction (5S)-hydroperoxy-(6E,8Z,11Z,14Z)-eicosatetraenoate = 5-oxo-(6E,8Z,11Z,14Z)-eicosatetraenoate + H2O. It carries out the reaction (12S)-hydroperoxy-(5Z,8Z,10E,14Z)-eicosatetraenoate = 12-oxo-(5Z,8Z,10E,14Z)-eicosatetraenoate + H2O. The enzyme catalyses (15S)-hydroperoxy-(5Z,8Z,11Z,13E)-eicosatetraenoate = 15-oxo-(5Z,8Z,11Z,13E)-eicosatetraenoate + H2O. The catalysed reaction is (13S)-hydroperoxy-(9Z,11E)-octadecadienoate = 13-oxo-(9Z,11E)-octadecadienoate + H2O. It catalyses the reaction (5Z,8Z,11Z,14Z)-eicosatetraenoate + reduced [NADPH--hemoprotein reductase] + O2 = 13-hydroxy-(5Z,8Z,11Z,14Z)-eicosatetraenoate + oxidized [NADPH--hemoprotein reductase] + H2O + H(+). It carries out the reaction (5Z,8Z,11Z,14Z)-eicosatetraenoate + reduced [NADPH--hemoprotein reductase] + O2 = 19-hydroxy-(5Z,8Z,11Z,14Z)-eicosatetraenoate + oxidized [NADPH--hemoprotein reductase] + H2O + H(+). The enzyme catalyses (9Z,12Z)-octadecadienoate + reduced [NADPH--hemoprotein reductase] + O2 = 11-hydroxy-(9Z,12Z)-octadecadienoate + oxidized [NADPH--hemoprotein reductase] + H2O + H(+). It participates in cofactor metabolism; retinol metabolism. Its pathway is steroid metabolism; cholesterol metabolism. It functions in the pathway lipid metabolism; arachidonate metabolism. A cytochrome P450 monooxygenase involved in the metabolism of various endogenous substrates, including fatty acids, steroid hormones and vitamins. Mechanistically, uses molecular oxygen inserting one oxygen atom into a substrate, and reducing the second into a water molecule, with two electrons provided by NADPH via cytochrome P450 reductase (NADPH--hemoprotein reductase). Catalyzes the hydroxylation of carbon-hydrogen bonds. Exhibits high catalytic activity for the formation of hydroxyestrogens from estrone (E1) and 17beta-estradiol (E2), namely 2-hydroxy E1 and E2. Metabolizes cholesterol toward 25-hydroxycholesterol, a physiological regulator of cellular cholesterol homeostasis. May act as a major enzyme for all-trans retinoic acid biosynthesis in the liver. Catalyzes two successive oxidative transformation of all-trans retinol to all-trans retinal and then to the active form all-trans retinoic acid. Primarily catalyzes stereoselective epoxidation of the last double bond of polyunsaturated fatty acids (PUFA), displaying a strong preference for the (R,S) stereoisomer. Catalyzes bisallylic hydroxylation and omega-1 hydroxylation of PUFA. May also participate in eicosanoids metabolism by converting hydroperoxide species into oxo metabolites (lipoxygenase-like reaction, NADPH-independent). Plays a role in the oxidative metabolism of xenobiotics. Catalyzes the N-hydroxylation of heterocyclic amines and the O-deethylation of phenacetin. Metabolizes caffeine via N3-demethylation. This chain is Cytochrome P450 1A2 (CYP1A2), found in Mesocricetus auratus (Golden hamster).